The primary structure comprises 514 residues: 2'-5'-oligoadenylate synthase-like protein (514 aa).

Ala2 is modified (N-acetylalanine). 2 Ubiquitin-like domains span residues 354-433 (IHLT…IPSE) and 434-509 (IQVF…KGEA).

It belongs to the 2-5A synthase family. In terms of assembly, specifically interacts with the ligand binding domain of the thyroid receptor (TR). TRIP14 does not require the presence of thyroid hormone for its interaction. Binds MBD1. Expressed in most tissues, with the highest levels in primary blood Leukocytes and other hematopoietic system tissues, colon, stomach and to some extent in testis.

It localises to the nucleus. It is found in the nucleolus. The protein localises to the cytoplasm. Functionally, does not have 2'-5'-OAS activity, but can bind double-stranded RNA. Displays antiviral activity against encephalomyocarditis virus (EMCV) and hepatitis C virus (HCV) via an alternative antiviral pathway independent of RNase L. This is 2'-5'-oligoadenylate synthase-like protein (OASL) from Homo sapiens (Human).